The primary structure comprises 759 residues: RNA-binding protein 28 (759 aa).

Alanine 2 is subject to N-acetylalanine. The RRM 1 domain maps to 4-80 (LTLFVGRLPP…CKINVTVAKK (77 aa)). Residues 84–105 (NKTKEKGKNENSECPKKEPKAK) form a disordered region. Basic and acidic residues predominate over residues 85–101 (KTKEKGKNENSECPKKE). Positions 114–191 (ARLIIRNLSF…RTVAVDWAVA (78 aa)) constitute an RRM 2 domain. Serine 122 carries the phosphoserine modification. The interval 201–330 (VSAIGEEKSH…NKKKRKLPSD (130 aa)) is disordered. Positions 205–224 (GEEKSHESKHQESVKKKGRE) are enriched in basic and acidic residues. 2 stretches are compositionally biased toward acidic residues: residues 225–256 (EEDM…EEEN) and 284–313 (SEED…EEQE). RRM domains lie at 335 to 419 (KTVF…LAVT) and 487 to 597 (TRLC…RSLQ). At serine 397 the chain carries Phosphoserine. The segment at 594–759 (RSLQKMRSKP…LAKRSKWFDS (166 aa)) is disordered. Residues 615-640 (PAKDQQQKAAQHHTEEQSKVPPEQKR) are compositionally biased toward basic and acidic residues. Lysine 653 is covalently cross-linked (Glycyl lysine isopeptide (Lys-Gly) (interchain with G-Cter in SUMO2)). A compositionally biased stretch (basic residues) spans 689 to 698 (VKPVHPKKPK). Over residues 700–715 (QINQWKQEKQQLSSEQ) the composition is skewed to polar residues.

In terms of assembly, interacts with U1, U2, U4, U5, and U6 spliceosomal small nuclear RNAs (snRNAs). As to expression, ubiquitously expressed.

It is found in the nucleus. It localises to the nucleolus. Its function is as follows. Nucleolar component of the spliceosomal ribonucleoprotein complexes. The polypeptide is RNA-binding protein 28 (RBM28) (Homo sapiens (Human)).